The sequence spans 263 residues: (R)-S-adenosyl-L-methionine hydrolase (263 aa).

Adenosine-binding residues include Asp-18, Asp-82, and Asn-181. The (R)-S-adenosyl-L-methionine site is built by Asn-181, Tyr-221, Ser-234, Glu-239, and Met-244.

The protein belongs to the SAM hydrolase / SAM-dependent halogenase family. In terms of assembly, homotrimer.

The catalysed reaction is (R)-S-adenosyl-L-methionine + H2O = adenosine + L-methionine + H(+). Functionally, catalyzes the hydrolysis of S-adenosyl-L-methionine (SAM) into adenosine and L-methionine. Does not have chlorinase or fluorinase activity. The protein is (R)-S-adenosyl-L-methionine hydrolase of Methanocaldococcus jannaschii (strain ATCC 43067 / DSM 2661 / JAL-1 / JCM 10045 / NBRC 100440) (Methanococcus jannaschii).